Reading from the N-terminus, the 119-residue chain is Large ribosomal subunit protein eL31y (119 aa).

This sequence belongs to the eukaryotic ribosomal protein eL31 family.

The chain is Large ribosomal subunit protein eL31y (RPL31B) from Arabidopsis thaliana (Mouse-ear cress).